The following is a 481-amino-acid chain: Pentatricopeptide repeat-containing protein At2g48000 (481 aa).

9 PPR repeats span residues 147-181 (TTSV…QDGP), 187-221 (SVST…NILP), 222-256 (DSST…LVKP), 257-287 (TLAT…VKRH), 292-324 (EIKL…LIPK), 328-362 (KPWL…GLQI), 364-398 (TDGI…GWKM), 399-433 (SRSM…KISR), and 434-469 (SKKT…GHDF).

The protein belongs to the PPR family. P subfamily.

This Arabidopsis thaliana (Mouse-ear cress) protein is Pentatricopeptide repeat-containing protein At2g48000.